The chain runs to 171 residues: Ribosome maturation factor RimM (171 aa).

The 73-residue stretch at 96–168 (EDGFYDHELE…TATITPPEGL (73 aa)) folds into the PRC barrel domain.

This sequence belongs to the RimM family. Binds ribosomal protein uS19.

The protein resides in the cytoplasm. An accessory protein needed during the final step in the assembly of 30S ribosomal subunit, possibly for assembly of the head region. Essential for efficient processing of 16S rRNA. May be needed both before and after RbfA during the maturation of 16S rRNA. It has affinity for free ribosomal 30S subunits but not for 70S ribosomes. This is Ribosome maturation factor RimM from Corynebacterium glutamicum (strain ATCC 13032 / DSM 20300 / JCM 1318 / BCRC 11384 / CCUG 27702 / LMG 3730 / NBRC 12168 / NCIMB 10025 / NRRL B-2784 / 534).